Consider the following 2123-residue polypeptide: Bromodomain adjacent to zinc finger domain protein 2B (2123 aa).

Disordered regions lie at residues 1 to 129 (MESG…VNGT), 144 to 306 (TPAS…LSQQ), 357 to 402 (PSPD…EMGK), 473 to 534 (NENV…HPHP), 546 to 691 (RGTD…RRVA), 756 to 793 (RAMDGRRGRPPNPDRPRAREESRMKRRKGRPPNVGSAE), and 937 to 960 (ARKKAEEKERLKQEKRDEKRLNKE). Low complexity predominate over residues 7 to 46 (LPSSPASSTTPTSSSAPSVASAVSKSSLSTGAASLSSTAS). Positions 83–95 (FFPPLLGIPPLFA) are enriched in pro residues. Polar residues predominate over residues 100 to 116 (NHDSSFHSRTSGKSSRN). Low complexity-rich tracts occupy residues 147-157 (SSSMGQNQSTS) and 193-216 (ESSSNSDSDSGTSSDTSSEGISSS). A compositionally biased stretch (acidic residues) spans 217–243 (DSDDLEEEEEEDQSVEESEDDDSDSET). A compositionally biased stretch (basic and acidic residues) spans 259–277 (SDPKTDGQKATEKAQERRT). Composition is skewed to low complexity over residues 291 to 306 (PPFQSQQKQPQVLSQQ) and 366 to 379 (NKNTSEESSSLTSE). The segment covering 473-502 (NENVSSSTPFSSPVNLSTSGRRAPGSQTPA) has biased composition (polar residues). Basic and acidic residues predominate over residues 546–559 (RGTDSDVPSSKDSE). Positions 560–587 (DSNEDEEEDDEEEDEEDDEDDESDDSQS) are enriched in acidic residues. Over residues 588 to 597 (ESDSNSQSDS) the composition is skewed to low complexity. Over residues 598–615 (EGSEDDEEKDQEESDSDT) the composition is skewed to acidic residues. Low complexity-rich tracts occupy residues 628 to 637 (SSSAKSPPSS) and 671 to 683 (TSSSTLTSTPHSG). Residues 690–765 (VADDQELRIP…RAMDGRRGRP (76 aa)) enclose the MBD domain. Over residues 756 to 778 (RAMDGRRGRPPNPDRPRAREESR) the composition is skewed to basic and acidic residues. One can recognise a DDT domain in the interval 1004–1069 (GTTFSDCLMV…LSAAVCDPGL (66 aa)). Disordered regions lie at residues 1183 to 1260 (RDAS…QTAS), 1396 to 1444 (PPES…KTDA), 1499 to 1526 (TLVTPQSQPPSKSPSPAPAALLGPSSVQ), and 1588 to 1614 (FLTSSVASSKSDSPVPPAERPSSAQPV). Positions 1214–1238 (SDYDDDDDDDSDDQADEDEEDEEDK) are enriched in acidic residues. A compositionally biased stretch (basic and acidic residues) spans 1239–1248 (DDKKGKKTDI). Positions 1254–1281 (EGDQTASVEELEKQIEKLSKQQSQYRRK) form a coiled coil. Composition is skewed to polar residues over residues 1408–1422 (NVSTNGGPLSHQNSG) and 1430–1444 (PSATTAQSPVGKTDA). Residues 1505 to 1515 (SQPPSKSPSPA) are compositionally biased toward pro residues. Over residues 1588-1600 (FLTSSVASSKSDS) the composition is skewed to low complexity. The PHD-type zinc-finger motif lies at 1886 to 1936 (KVYCQICRKGDNEELLLLCDGCDKGCHTYCHRPKITTIPDGDWFCPACISK). A disordered region spans residues 1949–2013 (VKGKKTNDSK…AESTTSIKKP (65 aa)). The segment covering 1984 to 1995 (GSKELKKRKMEE) has biased composition (basic and acidic residues). Polar residues predominate over residues 1996–2010 (TTSLNLSKAESTTSI). The Bromo domain occupies 2015-2119 (KDESRDLALC…KYFEKKWTDT (105 aa)).

Belongs to the WAL family. In terms of assembly, component of the BRF-1 ISWI chromatin remodeling complex, at least composed of SMARCA1 and BAZ2B, which regulates the spacing of histone octamers on the DNA template to facilitate access to DNA. Within the BRF-1 ISWI chromatin remodeling complex interacts with SMARCA1; the interaction is direct. Component of the BRF-5 ISWI chromatin remodeling complex, at least composed of SMARCA5/SNF2H and BAZ2B, which regulates the spacing of histone octamers on the DNA template to facilitate access to DNA. Within the BRF-5 ISWI chromatin remodeling complex interacts with SMARCA5/SNF2H; the interaction is direct. Interacts with acetylated lysine residues on histone H1.4, H2A, H2B, H3 and H4 (in vitro). Interacts with EHMT1.

Its subcellular location is the nucleus. In terms of biological role, regulatory subunit of the ATP-dependent BRF-1 and BRF-5 ISWI chromatin remodeling complexes, which form ordered nucleosome arrays on chromatin and facilitate access to DNA during DNA-templated processes such as DNA replication, transcription, and repair. Both complexes regulate the spacing of nucleosomes along the chromatin and have the ability to slide mononucleosomes to the center of a DNA template. The BRF-1 ISWI chromatin remodeling complex has a lower ATP hydrolysis rate than the BRF-5 ISWI chromatin remodeling complex. Chromatin reader protein, involved in positively modulating the rate of age-related behavioral deterioration. Represses the expression of mitochondrial function-related genes, perhaps by occupying their promoter regions, working in concert with histone methyltransferase EHMT1. The protein is Bromodomain adjacent to zinc finger domain protein 2B of Mus musculus (Mouse).